The primary structure comprises 658 residues: UvrABC system protein B (658 aa).

Residues 25–414 (KSLKNNNHYQ…LSKKNVAEQI (390 aa)) form the Helicase ATP-binding domain. 38–45 (GVTGSGKT) serves as a coordination point for ATP. The Beta-hairpin signature appears at 91–114 (HFDYYQPESYIPRRDLFIEKDSSI). The Helicase C-terminal domain maps to 433 to 607 (QVQDLFDEIK…ELKLRDDEIR (175 aa)). Residues 623–658 (EKIIKELDKKMRECTKNLDFEEAMRLRDEIAQLRTL) enclose the UVR domain.

The protein belongs to the UvrB family. As to quaternary structure, forms a heterotetramer with UvrA during the search for lesions. Interacts with UvrC in an incision complex.

The protein localises to the cytoplasm. The UvrABC repair system catalyzes the recognition and processing of DNA lesions. A damage recognition complex composed of 2 UvrA and 2 UvrB subunits scans DNA for abnormalities. Upon binding of the UvrA(2)B(2) complex to a putative damaged site, the DNA wraps around one UvrB monomer. DNA wrap is dependent on ATP binding by UvrB and probably causes local melting of the DNA helix, facilitating insertion of UvrB beta-hairpin between the DNA strands. Then UvrB probes one DNA strand for the presence of a lesion. If a lesion is found the UvrA subunits dissociate and the UvrB-DNA preincision complex is formed. This complex is subsequently bound by UvrC and the second UvrB is released. If no lesion is found, the DNA wraps around the other UvrB subunit that will check the other stand for damage. The sequence is that of UvrABC system protein B from Helicobacter pylori (strain ATCC 700392 / 26695) (Campylobacter pylori).